The chain runs to 390 residues: tRNA (guanine(26)-N(2))-dimethyltransferase (390 aa).

The Trm1 methyltransferase domain maps to 4–378 (HIIEEGLVKI…MPLDELKQLI (375 aa)). S-adenosyl-L-methionine is bound by residues Arg37, Arg67, Asp85, Asp112, and Ala113. Residues Cys245, Cys248, Cys265, and Cys268 each coordinate Zn(2+).

The protein belongs to the class I-like SAM-binding methyltransferase superfamily. Trm1 family.

The enzyme catalyses guanosine(26) in tRNA + 2 S-adenosyl-L-methionine = N(2)-dimethylguanosine(26) in tRNA + 2 S-adenosyl-L-homocysteine + 2 H(+). Functionally, dimethylates a single guanine residue at position 26 of a number of tRNAs using S-adenosyl-L-methionine as donor of the methyl groups. The chain is tRNA (guanine(26)-N(2))-dimethyltransferase from Methanosphaera stadtmanae (strain ATCC 43021 / DSM 3091 / JCM 11832 / MCB-3).